Consider the following 143-residue polypeptide: Putative mediator of RNA polymerase II transcription subunit 11 (143 aa).

Residues 97-143 (ILSHLEDLNNIVENNQEKQEKEKQEKEKLEKEKLEKEKQQSNEMNID) adopt a coiled-coil conformation. Residues 109–143 (ENNQEKQEKEKQEKEKLEKEKLEKEKQQSNEMNID) are disordered. Positions 111–136 (NQEKQEKEKQEKEKLEKEKLEKEKQQ) are enriched in basic and acidic residues.

This sequence belongs to the Mediator complex subunit 11 family. In terms of assembly, component of the Mediator complex.

Its subcellular location is the nucleus. Functionally, component of the Mediator complex, a coactivator involved in the regulated transcription of nearly all RNA polymerase II-dependent genes. Mediator functions as a bridge to convey information from gene-specific regulatory proteins to the basal RNA polymerase II transcription machinery. Mediator is recruited to promoters by direct interactions with regulatory proteins and serves as a scaffold for the assembly of a functional pre-initiation complex with RNA polymerase II and the general transcription factors. The protein is Putative mediator of RNA polymerase II transcription subunit 11 (med11) of Dictyostelium discoideum (Social amoeba).